We begin with the raw amino-acid sequence, 438 residues long: UDP-N-acetylmuramoylalanine--D-glutamate ligase (438 aa).

Residue 112-118 participates in ATP binding; that stretch reads GSNGKST.

This sequence belongs to the MurCDEF family.

The protein resides in the cytoplasm. The enzyme catalyses UDP-N-acetyl-alpha-D-muramoyl-L-alanine + D-glutamate + ATP = UDP-N-acetyl-alpha-D-muramoyl-L-alanyl-D-glutamate + ADP + phosphate + H(+). The protein operates within cell wall biogenesis; peptidoglycan biosynthesis. Cell wall formation. Catalyzes the addition of glutamate to the nucleotide precursor UDP-N-acetylmuramoyl-L-alanine (UMA). The sequence is that of UDP-N-acetylmuramoylalanine--D-glutamate ligase from Pectobacterium atrosepticum (strain SCRI 1043 / ATCC BAA-672) (Erwinia carotovora subsp. atroseptica).